A 149-amino-acid chain; its full sequence is 3-dehydroquinate dehydratase (149 aa).

Tyr-26 serves as the catalytic Proton acceptor. 3 residues coordinate substrate: Asn-77, His-83, and Asp-90. His-103 acts as the Proton donor in catalysis. Residues 104–105 (LS) and Arg-114 contribute to the substrate site.

Belongs to the type-II 3-dehydroquinase family. In terms of assembly, homododecamer.

It catalyses the reaction 3-dehydroquinate = 3-dehydroshikimate + H2O. The protein operates within metabolic intermediate biosynthesis; chorismate biosynthesis; chorismate from D-erythrose 4-phosphate and phosphoenolpyruvate: step 3/7. Catalyzes a trans-dehydration via an enolate intermediate. The sequence is that of 3-dehydroquinate dehydratase from Haemophilus influenzae (strain PittEE).